Here is a 359-residue protein sequence, read N- to C-terminus: tRNA N6-adenosine threonylcarbamoyltransferase (359 aa).

Positions 121 and 125 each coordinate Fe cation. Residues 143 to 147 (LVSGG), aspartate 176, glycine 189, and asparagine 286 each bind substrate. Aspartate 311 provides a ligand contact to Fe cation.

It belongs to the KAE1 / TsaD family. Fe(2+) serves as cofactor.

It localises to the cytoplasm. It catalyses the reaction L-threonylcarbamoyladenylate + adenosine(37) in tRNA = N(6)-L-threonylcarbamoyladenosine(37) in tRNA + AMP + H(+). Its function is as follows. Required for the formation of a threonylcarbamoyl group on adenosine at position 37 (t(6)A37) in tRNAs that read codons beginning with adenine. Is involved in the transfer of the threonylcarbamoyl moiety of threonylcarbamoyl-AMP (TC-AMP) to the N6 group of A37, together with TsaE and TsaB. TsaD likely plays a direct catalytic role in this reaction. This chain is tRNA N6-adenosine threonylcarbamoyltransferase, found in Jannaschia sp. (strain CCS1).